The primary structure comprises 102 residues: Inner membrane protein YaiY (102 aa).

Topologically, residues 1–24 are cytoplasmic; the sequence is MADFTLSKSLFSGKYRNASSTPGN. The chain crosses the membrane as a helical span at residues 25 to 45; sequence IAYALFVLFCFWAGAQLLNLL. The Periplasmic portion of the chain corresponds to 46 to 74; that stretch reads VHAPGVYERLMQVQETGRPRVEIGLGVGT. The helical transmembrane segment at 75–95 threads the bilayer; it reads IFGLIPFLVGCLIFAVVALWL. At 96–102 the chain is on the cytoplasmic side; it reads HWRHRRQ.

It is found in the cell inner membrane. The sequence is that of Inner membrane protein YaiY (yaiY) from Escherichia coli O157:H7.